A 657-amino-acid chain; its full sequence is Forkhead box protein O3 (657 aa).

2 disordered regions span residues Met-1–Ala-71 and Ser-216–Asp-320. Positions Trp-142 to Ala-236 form a DNA-binding region, fork-head. A compositionally biased stretch (basic residues) spans Thr-246–Ala-257. Positions Asp-268–Arg-283 are enriched in polar residues. Basic and acidic residues predominate over residues Ser-284–Ser-296. Over residues Arg-297–Gly-307 the composition is skewed to polar residues.

Dephosphorylation may promote translocation to the nucleus where the protein induces transcription of target genes and triggers apoptosis. As to expression, localized to the animal hemisphere during early cleavage stages. At the late neurula, localized in the anterior neural plate, neural crest cells and in the hatching gland. As development progresses, expression becomes less localized, being observed in a variety of organs and tissues including the head, branchial arches and somites by stage 32.

The protein localises to the cytoplasm. It is found in the cytosol. It localises to the nucleus. Functionally, transcriptional activator that recognizes and binds to the DNA sequence 5'-[AG]TAAA[TC]A-3' and regulates different processes, such as apoptosis and autophagy. Acts as a positive regulator of autophagy in skeletal muscle: in starved cells, enters the nucleus following dephosphorylation and binds the promoters of autophagy genes, thereby activating their expression, resulting in proteolysis of skeletal muscle proteins. Triggers apoptosis in the absence of survival factors, including neuronal cell death upon oxidative stress. In response to metabolic stress, translocates into the mitochondria where it promotes mtDNA transcription. Also acts as a key regulator of chondrogenic commitment of skeletal progenitor cells in response to lipid availability: when lipids levels are low, translocates to the nucleus and promotes expression of sox9, which induces chondrogenic commitment and suppresses fatty acid oxidation. Also acts as a key regulator of regulatory T-cells (Treg) differentiation. The polypeptide is Forkhead box protein O3 (Xenopus laevis (African clawed frog)).